A 364-amino-acid chain; its full sequence is Fructose-bisphosphate aldolase B (364 aa).

Position 2 is an N-acetylalanine (Ala2). Lys13 bears the N6-succinyllysine mark. The residue at position 36 (Ser36) is a Phosphoserine. Thr39 bears the Phosphothreonine mark. Arg43 serves as a coordination point for beta-D-fructose 1,6-bisphosphate. At Thr119 the chain carries Phosphothreonine. An N6-succinyllysine modification is found at Lys121. Residue Ser132 is modified to Phosphoserine. The Proton acceptor role is filled by Glu188. Lys230 (schiff-base intermediate with dihydroxyacetone-P) is an active-site residue. 4 positions are modified to phosphoserine: Ser272, Ser276, Ser299, and Ser301. A beta-D-fructose 1,6-bisphosphate-binding site is contributed by 272–274; it reads SGG. Arg304 provides a ligand contact to beta-D-fructose 1,6-bisphosphate. At Ser309 the chain carries Phosphoserine. N6-succinyllysine is present on Lys317.

The protein belongs to the class I fructose-bisphosphate aldolase family. Homotetramer. Interacts with BBS1, BBS2, BBS4 and BBS7. Forms a ternary complex with G6PD and TP53; this interaction is direct.

The protein resides in the cytoplasm. The protein localises to the cytosol. It localises to the cytoskeleton. It is found in the microtubule organizing center. Its subcellular location is the centrosome. The protein resides in the centriolar satellite. It catalyses the reaction beta-D-fructose 1,6-bisphosphate = D-glyceraldehyde 3-phosphate + dihydroxyacetone phosphate. It carries out the reaction beta-D-fructose 1-phosphate = D-glyceraldehyde + dihydroxyacetone phosphate. Its pathway is carbohydrate degradation; glycolysis; D-glyceraldehyde 3-phosphate and glycerone phosphate from D-glucose: step 4/4. It functions in the pathway carbohydrate biosynthesis; gluconeogenesis. It participates in carbohydrate metabolism; fructose metabolism. Functionally, catalyzes the aldol cleavage of fructose 1,6-biphosphate to form two triosephosphates dihydroxyacetone phosphate and D-glyceraldehyde 3-phosphate in glycolysis as well as the reverse stereospecific aldol addition reaction in gluconeogenesis. In fructolysis, metabolizes fructose 1-phosphate derived from the phosphorylation of dietary fructose by fructokinase into dihydroxyacetone phosphate and D-glyceraldehyde. Acts as an adapter independently of its enzymatic activity, exerts a tumor suppressor role by stabilizing the ternary complex with G6PD and TP53 to inhibit G6PD activity and keep oxidative pentose phosphate metabolism in check. The protein is Fructose-bisphosphate aldolase B (ALDOB) of Bos taurus (Bovine).